Consider the following 275-residue polypeptide: Interleukin-2 receptor subunit alpha (275 aa).

The signal sequence occupies residues 1–21; the sequence is MEPSLLMWRFFVFIVVPGCVT. In terms of domain architecture, Sushi 1 spans 22–81; that stretch reads EACHDDPPSLRNAMFKVFRYEVGTMINCDCKTGFRRVSAVMRCVGDSSHSAWENRCFCNS. At 22-243 the chain is on the extracellular side; the sequence is EACHDDPPSL…DTFIFTTEYQ (222 aa). Disulfide bonds link cysteine 24–cysteine 64, cysteine 49–cysteine 77, and cysteine 51–cysteine 79. A glycan (N-linked (GlcNAc...) asparagine) is linked at asparagine 80. The disordered stretch occupies residues 88–130; it reads QVKQVTPAPEEHREKKHTDAQNQTQPPEEADLPGHCEEPPPWE. Over residues 96-106 the composition is skewed to basic and acidic residues; that stretch reads PEEHREKKHTD. N-linked (GlcNAc...) asparagine glycosylation occurs at asparagine 109. Positions 119–130 are enriched in basic and acidic residues; the sequence is LPGHCEEPPPWE. The Sushi 2 domain maps to 121-186; the sequence is GHCEEPPPWE…WTRPRLKCIR (66 aa). 2 cysteine pairs are disulfide-bonded: cysteine 123/cysteine 168 and cysteine 152/cysteine 184. Residues 188-221 are disordered; that stretch reads GEHGQASDDAEPQESTEAPPGSGTFLPTRMAGTT. The chain crosses the membrane as a helical span at residues 244 to 262; the sequence is IAVAGCTLLLASILLLSCL. At 263–275 the chain is on the cytoplasmic side; that stretch reads TWQRKWKKNRRTI.

In terms of assembly, non-covalent dimer of an alpha and a beta subunit. IL2R exists in 3 different forms: a high affinity dimer, an intermediate affinity monomer (beta subunit), and a low affinity monomer (alpha subunit). The high and intermediate affinity forms also associate with a gamma subunit.

It is found in the membrane. Its function is as follows. Receptor for interleukin-2. The receptor is involved in the regulation of immune tolerance by controlling regulatory T cells (TREGs) activity. TREGs suppress the activation and expansion of autoreactive T-cells. The chain is Interleukin-2 receptor subunit alpha (IL2RA) from Bos taurus (Bovine).